Consider the following 286-residue polypeptide: MPSLKDLKNRIGSVKNTRKITKAMQMVAAAKLRRAQDSAEAARPYAERMGAVIASLASGQGAGAPRLLAGNGRDQIHLLVVMTSERGLCGGFNSTIVRLARQRANELVAQGKTVKILTVGKKGREQLKRDWASAFVGHVDLSDVRRLGYSNAQGIAREVLAAFEAGEADVVTIFYNRFQSVISQVPTAQQVIPAKFEAAETNALYDYEPSEEAILADLLPRGVATQIFTALLENAASEQGARMSAMDNATRNAGDMINKLTIQYNRSRQAAITKELIEIISGAEAL.

It belongs to the ATPase gamma chain family. As to quaternary structure, F-type ATPases have 2 components, CF(1) - the catalytic core - and CF(0) - the membrane proton channel. CF(1) has five subunits: alpha(3), beta(3), gamma(1), delta(1), epsilon(1). CF(0) has three main subunits: a, b and c.

The protein resides in the cell inner membrane. Produces ATP from ADP in the presence of a proton gradient across the membrane. The gamma chain is believed to be important in regulating ATPase activity and the flow of protons through the CF(0) complex. The polypeptide is ATP synthase gamma chain (Fuscovulum blasticum (Rhodobacter blasticus)).